The following is a 515-amino-acid chain: Acetyltransferase sphE (515 aa).

Catalysis depends on proton acceptor residues H184 and D438.

This sequence belongs to the plant acyltransferase family. As to quaternary structure, monomer.

The enzyme catalyses sphingofungin B + acetyl-CoA = sphingofungin C + CoA. The protein operates within secondary metabolite biosynthesis. In terms of biological role, acetyltransferase; part of the gene cluster that mediates the biosynthesis of sphingofungins, bioactive molecules acting as sphingolipid inhibitors via inhibiting serine palmitoyl transferase (SPT). Within the pathway, sphE catalyzes the O-acetylation of the C-5 hydroxyl group of sphingofungin B to produce sphingofungin C. SphE can also convert sphingofungin B1 into sphingofungin C1 and sphingofungin B2 into sphingofungin C2. Sphingofungin biosynthesis starts with the PKS sphB that produces an C18 polyketide precursor 3-hydroxyoctadeca-4,10-dienoyl-ACP containing one delta-6 desaturation and one delta-12 desaturation. The aminoacyl transferase sphA uses the sphB product to produce 3-keto-presphingofungin by adding an aminomalonate molecule. SphF then reduces the C-3 ketone of 3-keto-presphingofungin which leads to presphingofungin. The cytochrome P450 monooxygenase sphH converts presphingofungin into sphingofungin B1 which is further converted to sphingofungin B by the dioxygenase sphC. SphC is also able to convert presphingofungin into sphingofungin B2. The acetyltransferase sphE acetylates sphingofungin B to produce sphingofungin C, but can also convert sphingofungin B1 into sphingofungin C1 and sphingofungin B2 into sphingofungin C2. Finally, sphingofungin C can be spontaneously converted into sphingofungin D. The protein is Acetyltransferase sphE of Aspergillus fumigatus (strain CBS 144.89 / FGSC A1163 / CEA10) (Neosartorya fumigata).